Consider the following 252-residue polypeptide: 5'-nucleotidase SurE (252 aa).

A divalent metal cation-binding residues include D8, D9, S39, and N96.

It belongs to the SurE nucleotidase family. Requires a divalent metal cation as cofactor.

It localises to the cytoplasm. It carries out the reaction a ribonucleoside 5'-phosphate + H2O = a ribonucleoside + phosphate. Functionally, nucleotidase that shows phosphatase activity on nucleoside 5'-monophosphates. This is 5'-nucleotidase SurE from Petrotoga mobilis (strain DSM 10674 / SJ95).